The chain runs to 208 residues: Small ribosomal subunit protein uS4 (208 aa).

The region spanning 98 to 158 is the S4 RNA-binding domain; sequence RRLDNIAYRL…EKSRKVACIN (61 aa).

The protein belongs to the universal ribosomal protein uS4 family. Part of the 30S ribosomal subunit. Contacts protein S5. The interaction surface between S4 and S5 is involved in control of translational fidelity.

In terms of biological role, one of the primary rRNA binding proteins, it binds directly to 16S rRNA where it nucleates assembly of the body of the 30S subunit. Functionally, with S5 and S12 plays an important role in translational accuracy. This is Small ribosomal subunit protein uS4 from Geotalea uraniireducens (strain Rf4) (Geobacter uraniireducens).